A 109-amino-acid chain; its full sequence is MAPKKDKVPPPSSKPAKSGGGKQKKKKWSKGKQKEKVNNMVLFDQATYDKLMSEAPKFKLITPSILSDRLRINGSLARKAIRDLMVKGTIRMVSTHSSQQINTRATCLT.

The tract at residues 1 to 36 is disordered; it reads MAPKKDKVPPPSSKPAKSGGGKQKKKKWSKGKQKEK. Positions 22–31 are enriched in basic residues; sequence KQKKKKWSKG.

The protein belongs to the eukaryotic ribosomal protein eS25 family.

The sequence is that of Small ribosomal subunit protein eS25z (RPS25A) from Arabidopsis thaliana (Mouse-ear cress).